A 99-amino-acid polypeptide reads, in one-letter code: Progonadoliberin-1 (99 aa).

An N-terminal signal peptide occupies residues 1–26 (MAAQTFALRLLLVGTLLGTLLGQGCC). The residue at position 27 (glutamine 27) is a Pyrrolidone carboxylic acid. At glycine 36 the chain carries Glycine amide.

The protein belongs to the GnRH family.

It is found in the secreted. Its function is as follows. Stimulates the secretion of gonadotropins. The protein is Progonadoliberin-1 (gnrh1) of Dicentrarchus labrax (European seabass).